Reading from the N-terminus, the 284-residue chain is Rubber cis-polyprenyltransferase HRT2 (284 aa).

D41 is a catalytic residue.

It belongs to the UPP synthase family. Predominantly expressed in latex.

It catalyses the reaction (cis-prenyl)(n)-diphosphate + isopentenyl diphosphate = (cis-prenyl)(n+1)-diphosphate + diphosphate. Functionally, proposed to be involved in rubber biosynthesis as a particle-bound rubber transferase responsible for the cis-1,4-polymerization of isoprene subunits. Probably requires additional factors for the production of high molecular mass rubber. The polypeptide is Rubber cis-polyprenyltransferase HRT2 (HRT2) (Hevea brasiliensis (Para rubber tree)).